Reading from the N-terminus, the 271-residue chain is Tryptophan synthase alpha chain (271 aa).

Active-site proton acceptor residues include Glu56 and Asp67.

This sequence belongs to the TrpA family. In terms of assembly, tetramer of two alpha and two beta chains.

The enzyme catalyses (1S,2R)-1-C-(indol-3-yl)glycerol 3-phosphate + L-serine = D-glyceraldehyde 3-phosphate + L-tryptophan + H2O. Its pathway is amino-acid biosynthesis; L-tryptophan biosynthesis; L-tryptophan from chorismate: step 5/5. In terms of biological role, the alpha subunit is responsible for the aldol cleavage of indoleglycerol phosphate to indole and glyceraldehyde 3-phosphate. In Mycobacterium avium (strain 104), this protein is Tryptophan synthase alpha chain.